The sequence spans 544 residues: Chaperonin GroEL (544 aa).

ATP is bound by residues 29–32 (TLGP), 86–90 (DGTTT), Gly413, 476–478 (NAL), and Asp492.

The protein belongs to the chaperonin (HSP60) family. In terms of assembly, forms a cylinder of 14 subunits composed of two heptameric rings stacked back-to-back. Interacts with the co-chaperonin GroES.

The protein localises to the cytoplasm. The enzyme catalyses ATP + H2O + a folded polypeptide = ADP + phosphate + an unfolded polypeptide.. In terms of biological role, together with its co-chaperonin GroES, plays an essential role in assisting protein folding. The GroEL-GroES system forms a nano-cage that allows encapsulation of the non-native substrate proteins and provides a physical environment optimized to promote and accelerate protein folding. The protein is Chaperonin GroEL of Desulfitobacterium hafniense (strain Y51).